We begin with the raw amino-acid sequence, 347 residues long: Quinolinate synthase (347 aa).

Positions 47 and 68 each coordinate iminosuccinate. Residue C113 participates in [4Fe-4S] cluster binding. Residues Y139–N141 and S156 contribute to the iminosuccinate site. C200 provides a ligand contact to [4Fe-4S] cluster. Iminosuccinate is bound by residues H226–E228 and T243. C297 is a binding site for [4Fe-4S] cluster.

The protein belongs to the quinolinate synthase family. Type 1 subfamily. It depends on [4Fe-4S] cluster as a cofactor.

It localises to the cytoplasm. It catalyses the reaction iminosuccinate + dihydroxyacetone phosphate = quinolinate + phosphate + 2 H2O + H(+). The protein operates within cofactor biosynthesis; NAD(+) biosynthesis; quinolinate from iminoaspartate: step 1/1. Functionally, catalyzes the condensation of iminoaspartate with dihydroxyacetone phosphate to form quinolinate. This is Quinolinate synthase from Escherichia coli O127:H6 (strain E2348/69 / EPEC).